The following is a 79-amino-acid chain: MVKLRLKRYGRKQQPTYRIIAIDVRCRRDGKALKEVGFYDPLKDKTQLNVPAILTLLQHGAQPTDTVSHILQKAGVFEK.

It belongs to the bacterial ribosomal protein bS16 family.

The protein localises to the plastid. It localises to the chloroplast. This is Small ribosomal subunit protein bS16c from Staurastrum punctulatum (Green alga).